We begin with the raw amino-acid sequence, 164 residues long: UPF0262 protein Xaut_1232 (164 aa).

It belongs to the UPF0262 family.

This Xanthobacter autotrophicus (strain ATCC BAA-1158 / Py2) protein is UPF0262 protein Xaut_1232.